Here is a 204-residue protein sequence, read N- to C-terminus: 8-oxoguanine DNA glycosylase/AP lyase (204 aa).

Active-site residues include Lys129 and Asp147.

Belongs to the type-2 OGG1 family.

The enzyme catalyses 2'-deoxyribonucleotide-(2'-deoxyribose 5'-phosphate)-2'-deoxyribonucleotide-DNA = a 3'-end 2'-deoxyribonucleotide-(2,3-dehydro-2,3-deoxyribose 5'-phosphate)-DNA + a 5'-end 5'-phospho-2'-deoxyribonucleoside-DNA + H(+). Catalyzes the excision of an oxidatively damaged form of guanine (7,8-dihydro-8-oxoguanine = 8-oxoG) from DNA. Also cleaves the DNA backbone at apurinic/apyrimidinic sites (AP sites). Prefers oligomers containing 8-oxoG:C, 8-oxoG:T and 8-oxoG:G base pairs, and is less effective on oligomers containing 8-oxoG:A mispairs. The sequence is that of 8-oxoguanine DNA glycosylase/AP lyase from Thermoplasma volcanium (strain ATCC 51530 / DSM 4299 / JCM 9571 / NBRC 15438 / GSS1).